The sequence spans 127 residues: uncharacterized protein (127 aa).

The next 2 helical transmembrane spans lie at 64–84 and 101–118; these read GYYITNLICIVVGLFLYFGYL and FFHFFFTILAVTSRAIYY.

The protein localises to the membrane. This is an uncharacterized protein from Saccharomyces cerevisiae (strain ATCC 204508 / S288c) (Baker's yeast).